The primary structure comprises 1303 residues: DNA-directed RNA polymerase subunit beta'' (1303 aa).

Residues Cys-225, Cys-299, Cys-306, and Cys-309 each coordinate Zn(2+).

The protein belongs to the RNA polymerase beta' chain family. RpoC2 subfamily. In terms of assembly, in plastids the minimal PEP RNA polymerase catalytic core is composed of four subunits: alpha, beta, beta', and beta''. When a (nuclear-encoded) sigma factor is associated with the core the holoenzyme is formed, which can initiate transcription. Zn(2+) is required as a cofactor.

Its subcellular location is the plastid. It localises to the chloroplast. The enzyme catalyses RNA(n) + a ribonucleoside 5'-triphosphate = RNA(n+1) + diphosphate. In terms of biological role, DNA-dependent RNA polymerase catalyzes the transcription of DNA into RNA using the four ribonucleoside triphosphates as substrates. This Rhodomonas salina (Cryptomonas salina) protein is DNA-directed RNA polymerase subunit beta''.